We begin with the raw amino-acid sequence, 141 residues long: MAKKVANIVKLQIPAGKATPAPPVGPALGQAGINIMGFTKDFNARTADQAGLLIPVVITVYEDRSFDFVTKTPPASVLLKKAAGVEHGSGEPNTNKVATVTSAQVKEIAETKMQDLNAADVEAAMRMIEGTARSMGFVVEG.

The protein belongs to the universal ribosomal protein uL11 family. Part of the ribosomal stalk of the 50S ribosomal subunit. Interacts with L10 and the large rRNA to form the base of the stalk. L10 forms an elongated spine to which L12 dimers bind in a sequential fashion forming a multimeric L10(L12)X complex. Post-translationally, one or more lysine residues are methylated.

In terms of biological role, forms part of the ribosomal stalk which helps the ribosome interact with GTP-bound translation factors. The sequence is that of Large ribosomal subunit protein uL11 from Pediococcus pentosaceus (strain ATCC 25745 / CCUG 21536 / LMG 10740 / 183-1w).